We begin with the raw amino-acid sequence, 125 residues long: Small ribosomal subunit protein uS13 (125 aa).

The tract at residues 95 to 125 (GLPVNGQRTRTNARTRKGGKKTVANKKKVTK) is disordered. Positions 105-125 (TNARTRKGGKKTVANKKKVTK) are enriched in basic residues.

The protein belongs to the universal ribosomal protein uS13 family. Part of the 30S ribosomal subunit. Forms a loose heterodimer with protein S19. Forms two bridges to the 50S subunit in the 70S ribosome.

Located at the top of the head of the 30S subunit, it contacts several helices of the 16S rRNA. In the 70S ribosome it contacts the 23S rRNA (bridge B1a) and protein L5 of the 50S subunit (bridge B1b), connecting the 2 subunits; these bridges are implicated in subunit movement. Contacts the tRNAs in the A and P-sites. The polypeptide is Small ribosomal subunit protein uS13 (Leptospira interrogans serogroup Icterohaemorrhagiae serovar copenhageni (strain Fiocruz L1-130)).